The primary structure comprises 570 residues: Proline--tRNA ligase (570 aa).

Belongs to the class-II aminoacyl-tRNA synthetase family. ProS type 1 subfamily. As to quaternary structure, homodimer.

It is found in the cytoplasm. It catalyses the reaction tRNA(Pro) + L-proline + ATP = L-prolyl-tRNA(Pro) + AMP + diphosphate. In terms of biological role, catalyzes the attachment of proline to tRNA(Pro) in a two-step reaction: proline is first activated by ATP to form Pro-AMP and then transferred to the acceptor end of tRNA(Pro). As ProRS can inadvertently accommodate and process non-cognate amino acids such as alanine and cysteine, to avoid such errors it has two additional distinct editing activities against alanine. One activity is designated as 'pretransfer' editing and involves the tRNA(Pro)-independent hydrolysis of activated Ala-AMP. The other activity is designated 'posttransfer' editing and involves deacylation of mischarged Ala-tRNA(Pro). The misacylated Cys-tRNA(Pro) is not edited by ProRS. This chain is Proline--tRNA ligase, found in Geotalea daltonii (strain DSM 22248 / JCM 15807 / FRC-32) (Geobacter daltonii).